Reading from the N-terminus, the 300-residue chain is Geranylgeranyl pyrophosphate synthase (300 aa).

Met1 carries the N-acetylmethionine modification. Positions 25, 28, and 57 each coordinate isopentenyl diphosphate. Residues Asp64 and Asp68 each contribute to the Mg(2+) site. Arg73 contributes to the dimethylallyl diphosphate binding site. Residue Arg74 coordinates isopentenyl diphosphate. 5 residues coordinate dimethylallyl diphosphate: Lys151, Thr152, Gln185, Lys202, and Lys212.

This sequence belongs to the FPP/GGPP synthase family. As to quaternary structure, homohexamer; trimer of homodimers. Mg(2+) serves as cofactor.

The protein resides in the cytoplasm. It localises to the perinuclear region. It is found in the myofibril. The protein localises to the sarcomere. Its subcellular location is the z line. The catalysed reaction is isopentenyl diphosphate + dimethylallyl diphosphate = (2E)-geranyl diphosphate + diphosphate. The enzyme catalyses isopentenyl diphosphate + (2E)-geranyl diphosphate = (2E,6E)-farnesyl diphosphate + diphosphate. It catalyses the reaction isopentenyl diphosphate + (2E,6E)-farnesyl diphosphate = (2E,6E,10E)-geranylgeranyl diphosphate + diphosphate. The protein operates within isoprenoid biosynthesis; farnesyl diphosphate biosynthesis; farnesyl diphosphate from geranyl diphosphate and isopentenyl diphosphate: step 1/1. It participates in isoprenoid biosynthesis; geranyl diphosphate biosynthesis; geranyl diphosphate from dimethylallyl diphosphate and isopentenyl diphosphate: step 1/1. It functions in the pathway isoprenoid biosynthesis; geranylgeranyl diphosphate biosynthesis; geranylgeranyl diphosphate from farnesyl diphosphate and isopentenyl diphosphate: step 1/1. Functionally, catalyzes the trans-addition of the three molecules of IPP onto DMAPP to form geranylgeranyl pyrophosphate, an important precursor of carotenoids and geranylated proteins. This Rattus norvegicus (Rat) protein is Geranylgeranyl pyrophosphate synthase (Ggps1).